Reading from the N-terminus, the 110-residue chain is UPF0339 protein PA0329 (110 aa).

Repeat copies occupy residues 10–58 and 61–109. The disordered stretch occupies residues 91 to 110; that stretch reads EAGVQSVKRATPEAGLSDES.

The protein belongs to the UPF0339 family. Duplicated subfamily.

The sequence is that of UPF0339 protein PA0329 from Pseudomonas aeruginosa (strain ATCC 15692 / DSM 22644 / CIP 104116 / JCM 14847 / LMG 12228 / 1C / PRS 101 / PAO1).